The chain runs to 346 residues: 4-hydroxy-3-methylbut-2-enyl diphosphate reductase (346 aa).

Cys19 provides a ligand contact to [4Fe-4S] cluster. (2E)-4-hydroxy-3-methylbut-2-enyl diphosphate is bound by residues His48 and His84. 2 residues coordinate dimethylallyl diphosphate: His48 and His84. 2 residues coordinate isopentenyl diphosphate: His48 and His84. Cys106 serves as a coordination point for [4Fe-4S] cluster. His134 is a binding site for (2E)-4-hydroxy-3-methylbut-2-enyl diphosphate. His134 contributes to the dimethylallyl diphosphate binding site. His134 contributes to the isopentenyl diphosphate binding site. Glu136 serves as the catalytic Proton donor. Thr175 contacts (2E)-4-hydroxy-3-methylbut-2-enyl diphosphate. Cys205 lines the [4Fe-4S] cluster pocket. Ser233, Ser234, Asn235, and Ser278 together coordinate (2E)-4-hydroxy-3-methylbut-2-enyl diphosphate. Dimethylallyl diphosphate is bound by residues Ser233, Ser234, Asn235, and Ser278. Residues Ser233, Ser234, Asn235, and Ser278 each contribute to the isopentenyl diphosphate site.

Belongs to the IspH family. [4Fe-4S] cluster serves as cofactor.

It carries out the reaction isopentenyl diphosphate + 2 oxidized [2Fe-2S]-[ferredoxin] + H2O = (2E)-4-hydroxy-3-methylbut-2-enyl diphosphate + 2 reduced [2Fe-2S]-[ferredoxin] + 2 H(+). It catalyses the reaction dimethylallyl diphosphate + 2 oxidized [2Fe-2S]-[ferredoxin] + H2O = (2E)-4-hydroxy-3-methylbut-2-enyl diphosphate + 2 reduced [2Fe-2S]-[ferredoxin] + 2 H(+). It functions in the pathway isoprenoid biosynthesis; dimethylallyl diphosphate biosynthesis; dimethylallyl diphosphate from (2E)-4-hydroxy-3-methylbutenyl diphosphate: step 1/1. The protein operates within isoprenoid biosynthesis; isopentenyl diphosphate biosynthesis via DXP pathway; isopentenyl diphosphate from 1-deoxy-D-xylulose 5-phosphate: step 6/6. Functionally, catalyzes the conversion of 1-hydroxy-2-methyl-2-(E)-butenyl 4-diphosphate (HMBPP) into a mixture of isopentenyl diphosphate (IPP) and dimethylallyl diphosphate (DMAPP). Acts in the terminal step of the DOXP/MEP pathway for isoprenoid precursor biosynthesis. The sequence is that of 4-hydroxy-3-methylbut-2-enyl diphosphate reductase from Brucella abortus (strain S19).